Consider the following 1069-residue polypeptide: Rab GTPase-activating protein 1 (1069 aa).

The segment at 1–79 (MDDKASVGKI…DPPMDDQPGE (79 aa)) is disordered. The span at 7 to 22 (VGKISVSSDSVSTLNS) shows a compositional bias: low complexity. Position 42 is a phosphoserine (Ser42). A PID domain is found at 142-298 (EDSVVFSKLT…IFTFSVSLEI (157 aa)). Ser360 carries the phosphoserine modification. Residues 482–527 (ERERRKTTASPSVRLPQSGSQSSVIPSPPEDDEEEDNDEPLLSGSG) are disordered. Residues 489–506 (TASPSVRLPQSGSQSSVI) are compositionally biased toward polar residues. Acidic residues predominate over residues 510 to 520 (PEDDEEEDNDE). One can recognise a Rab-GAP TBC domain in the interval 566–752 (GVPEALRGEV…HIIDLLLCEG (187 aa)). Positions 798–1047 (KKLMELACNM…ALNEVQAAKK (250 aa)) form a coiled coil. Thr996 bears the Phosphothreonine mark.

In terms of assembly, interacts with RAB6A and tubulin gamma.

Its subcellular location is the cytoplasm. It is found in the cytosol. The protein resides in the cytoskeleton. The protein localises to the microtubule organizing center. It localises to the centrosome. May act as a GTPase-activating protein of RAB6A. May play a role in microtubule nucleation by centrosome. May participate in a RAB6A-mediated pathway involved in the metaphase-anaphase transition. This chain is Rab GTPase-activating protein 1, found in Pongo abelii (Sumatran orangutan).